A 239-amino-acid polypeptide reads, in one-letter code: Transcriptional regulatory protein BtsR (239 aa).

One can recognise a Response regulatory domain in the interval 3–116; it reads KVLIVDDEPL…RLEKTLHRLR (114 aa). D54 carries the post-translational modification 4-aspartylphosphate. One can recognise an HTH LytTR-type domain in the interval 137–239; sequence IPCTGHSRIY…LKSLKEAIGL (103 aa).

In terms of processing, phosphorylated by BtsS.

In terms of biological role, member of the two-component regulatory system BtsS/BtsR. BtsR regulates expression of btsT by binding to its promoter region. In Salmonella typhimurium (strain LT2 / SGSC1412 / ATCC 700720), this protein is Transcriptional regulatory protein BtsR.